We begin with the raw amino-acid sequence, 377 residues long: Peptidyl-prolyl cis-trans isomerase D (377 aa).

Residues 11–178 (YFDIQIGSQK…TDVTIVDCGE (168 aa)) enclose the PPIase cyclophilin-type domain. 3 TPR repeats span residues 220-253 (ASEL…LNEF), 273-306 (FTLH…ADAA), and 314-347 (AKAY…APGD).

The protein belongs to the cyclophilin-type PPIase family. PPIase D subfamily.

It localises to the cytoplasm. The catalysed reaction is [protein]-peptidylproline (omega=180) = [protein]-peptidylproline (omega=0). PPIases accelerate the folding of proteins. It catalyzes the cis-trans isomerization of proline imidic peptide bonds in oligopeptides. The chain is Peptidyl-prolyl cis-trans isomerase D (cpr6) from Aspergillus fumigatus (strain ATCC MYA-4609 / CBS 101355 / FGSC A1100 / Af293) (Neosartorya fumigata).